Consider the following 778-residue polypeptide: Ribonucleoside-diphosphate reductase large subunit (778 aa).

Residues Ser177, 192 to 193 (SC), Gly221, 419 to 423 (NLCIE), and 613 to 617 (PTATS) contribute to the substrate site. Cys193 and Cys439 are disulfide-bonded. Asn419 serves as the catalytic Proton acceptor. Cys421 serves as the catalytic Cysteine radical intermediate. Glu423 serves as the catalytic Proton acceptor.

Belongs to the ribonucleoside diphosphate reductase large chain family. As to quaternary structure, heterotetramer composed of a homodimer of the large subunit (R1) and a homodimer of the small subunit (R2). Larger multisubunit protein complex are also active, composed of (R1)n(R2)n.

The catalysed reaction is a 2'-deoxyribonucleoside 5'-diphosphate + [thioredoxin]-disulfide + H2O = a ribonucleoside 5'-diphosphate + [thioredoxin]-dithiol. With respect to regulation, under complex allosteric control mediated by deoxynucleoside triphosphates and ATP binding. The type of nucleotide bound at the specificity site determines substrate preference. It seems probable that ATP makes the enzyme reduce CDP and UDP, dGTP favors ADP reduction and dTTP favors GDP reduction. Functionally, ribonucleoside-diphosphate reductase holoenzyme provides the precursors necessary for viral DNA synthesis. Allows virus growth in non-dividing cells. Catalyzes the biosynthesis of deoxyribonucleotides from the corresponding ribonucleotides. The polypeptide is Ribonucleoside-diphosphate reductase large subunit (Ornithodoros (relapsing fever ticks)).